Here is a 152-residue protein sequence, read N- to C-terminus: Transcriptional regulator MraZ (152 aa).

2 SpoVT-AbrB domains span residues 5-52 (ATQI…TLSE) and 81-124 (ASEC…DEQA).

Belongs to the MraZ family. Forms oligomers.

Its subcellular location is the cytoplasm. It localises to the nucleoid. In terms of biological role, negatively regulates its own expression and that of the subsequent genes in the proximal part of the division and cell wall (dcw) gene cluster. Acts by binding directly to DNA. May also regulate the expression of genes outside the dcw cluster. The polypeptide is Transcriptional regulator MraZ (Photorhabdus laumondii subsp. laumondii (strain DSM 15139 / CIP 105565 / TT01) (Photorhabdus luminescens subsp. laumondii)).